A 180-amino-acid chain; its full sequence is MTAFKIENETIADGFYACPAVYEDAESITGLLVRTAEWLRDRGSNQWSGLLKGQDIHDITGSIEKGHVFVFKKDEELAAVVMLLPAPSEWDRTLWGDDGHEESIYLHRLAVSRRFAGQGLGARVLQWAETGIHFPEKTRIRLDCVADSDALHSFYRRMGYEFMGADASGYHLFEKEITAE.

An N-acetyltransferase domain is found at 31-180; it reads LLVRTAEWLR…HLFEKEITAE (150 aa).

It belongs to the acetyltransferase family.

This is an uncharacterized protein from Bacillus subtilis (strain 168).